The sequence spans 58 residues: Sperm histone P2b (58 aa).

The interval 20–41 is disordered; that stretch reads LRRRRYRSSRRRRRRPCRRRRH.

Belongs to the protamine P2 family. In terms of tissue distribution, testis.

The protein resides in the nucleus. It is found in the chromosome. Protamines substitute for histones in the chromatin of sperm during the haploid phase of spermatogenesis. They compact sperm DNA into a highly condensed, stable and inactive complex. This is Sperm histone P2b from Equus caballus (Horse).